Consider the following 273-residue polypeptide: Pantothenate synthetase (273 aa).

Position 27–34 (27–34) interacts with ATP; that stretch reads MGALHEGH. The Proton donor role is filled by histidine 34. (R)-pantoate is bound at residue glutamine 58. Glutamine 58 lines the beta-alanine pocket. 144-147 contributes to the ATP binding site; that stretch reads GKKD. A (R)-pantoate-binding site is contributed by glutamine 150. Residues valine 173 and 181–184 contribute to the ATP site; that span reads LSSR.

It belongs to the pantothenate synthetase family. Homodimer.

Its subcellular location is the cytoplasm. It catalyses the reaction (R)-pantoate + beta-alanine + ATP = (R)-pantothenate + AMP + diphosphate + H(+). The protein operates within cofactor biosynthesis; (R)-pantothenate biosynthesis; (R)-pantothenate from (R)-pantoate and beta-alanine: step 1/1. Catalyzes the condensation of pantoate with beta-alanine in an ATP-dependent reaction via a pantoyl-adenylate intermediate. The polypeptide is Pantothenate synthetase (Sulfurimonas denitrificans (strain ATCC 33889 / DSM 1251) (Thiomicrospira denitrificans (strain ATCC 33889 / DSM 1251))).